Consider the following 653-residue polypeptide: Alpha-L-iduronidase (653 aa).

An N-terminal signal peptide occupies residues 1–27 (MRPLRPRAALLALLASLLAAPPVAPAE). Alpha-D-mannopyranose contacts are provided by Pro54, Leu56, and His58. His91 is an alpha-L-iduronate binding site. N-linked (GlcNAc...) asparagine glycosylation occurs at Asn110. 2 residues coordinate alpha-L-iduronate: Asn181 and Glu182. The Proton donor role is filled by Glu182. An N-linked (GlcNAc...) asparagine glycan is attached at Asn190. Lys264, Glu299, and Gly305 together coordinate alpha-L-iduronate. The active-site Nucleophile is the Glu299. Position 306 (Trp306) interacts with alpha-D-mannopyranose. A glycan (N-linked (GlcNAc...) asparagine) is linked at Asn336. 2 residues coordinate alpha-L-iduronate: Asp349 and Arg363. N-linked (GlcNAc...) asparagine glycosylation is found at Asn372, Asn415, and Asn451. Alpha-D-mannopyranose contacts are provided by Arg488 and Arg492. Arg492 provides a ligand contact to beta-D-mannose. Residues Cys541 and Cys577 are joined by a disulfide bond.

This sequence belongs to the glycosyl hydrolase 39 family. In terms of assembly, monomer. Post-translationally, N-glycosylation at Asn-372 contributes to substrate binding and is required for full enzymatic activity. As to expression, ubiquitous.

Its subcellular location is the lysosome. The enzyme catalyses Hydrolysis of unsulfated alpha-L-iduronosidic linkages in dermatan sulfate.. In Homo sapiens (Human), this protein is Alpha-L-iduronidase (IDUA).